A 355-amino-acid polypeptide reads, in one-letter code: Ataxin-3 (355 aa).

Met1 is covalently cross-linked (Peptide (Met-Gly) (interchain with G-Cter in ubiquitin)). Residues 1 to 180 (MESIFHEKQE…DCEADQLLQM (180 aa)) enclose the Josephin domain. Residue Cys14 is the Nucleophile of the active site. His119 acts as the Proton acceptor in catalysis. Residue Asn134 is part of the active site. A Glycyl lysine isopeptide (Lys-Gly) (interchain with G-Cter in ubiquitin) cross-link involves residue Lys200. UIM domains lie at 224-243 (DDED…IDME) and 244-263 (DEEA…SSRG). A disordered region spans residues 257–333 (MQGSSRGMCE…AGNAMSEEDV (77 aa)). A phosphoserine mark is found at Ser268, Ser272, and Ser273. Positions 279–301 (EELRKRREAYFEKQQHQQQEADR) are enriched in basic and acidic residues. Residues 312 to 326 (PTTSSGGLRSNQAGN) are compositionally biased toward polar residues. Residue Ser321 is modified to Phosphoserine. The 20-residue stretch at 329–348 (SEEDVLRATVTVSLETAKDS) folds into the UIM 3 domain.

As to quaternary structure, interacts with STUB1/CHIP (when monoubiquitinated). Interacts with DNA repair proteins RAD23A and RAD23B. Interacts with BECN1 (via its poly-Gln domain). Interacts with PRKN, UBR2, VCP and tubulin. Post-translationally, monoubiquitinated by UBE2W, possibly leading to activate the deubiquitinating enzyme activity. In terms of tissue distribution, ubiquitously expressed.

The protein localises to the nucleus matrix. It is found in the nucleus. It localises to the lysosome membrane. It catalyses the reaction Thiol-dependent hydrolysis of ester, thioester, amide, peptide and isopeptide bonds formed by the C-terminal Gly of ubiquitin (a 76-residue protein attached to proteins as an intracellular targeting signal).. In terms of biological role, deubiquitinating enzyme involved in protein homeostasis maintenance, transcription, cytoskeleton regulation, myogenesis and degradation of misfolded chaperone substrates. Binds long polyubiquitin chains and trims them, while it has weak or no activity against chains of 4 or less ubiquitins. Involved in degradation of misfolded chaperone substrates via its interaction with STUB1/CHIP: recruited to monoubiquitinated STUB1/CHIP, and restricts the length of ubiquitin chain attached to STUB1/CHIP substrates and preventing further chain extension. Interacts with key regulators of transcription and represses transcription: acts as a histone-binding protein that regulates transcription. Acts as a negative regulator of mTORC1 signaling in response to amino acid deprivation by mediating deubiquitination of RHEB, thereby promoting RHEB inactivation by the TSC-TBC complex. Regulates autophagy via the deubiquitination of 'Lys-402' of BECN1 leading to the stabilization of BECN1. This chain is Ataxin-3 (Atxn3), found in Rattus norvegicus (Rat).